A 610-amino-acid polypeptide reads, in one-letter code: UvrABC system protein C (610 aa).

Positions 16-94 (SQPGVYRMYD…IKLYQPRYNV (79 aa)) constitute a GIY-YIG domain. The UVR domain occupies 204–239 (QQVLTQLITRMEEASQQLHFEDAARIRDQIQAVRRV).

This sequence belongs to the UvrC family. Interacts with UvrB in an incision complex.

The protein resides in the cytoplasm. Functionally, the UvrABC repair system catalyzes the recognition and processing of DNA lesions. UvrC both incises the 5' and 3' sides of the lesion. The N-terminal half is responsible for the 3' incision and the C-terminal half is responsible for the 5' incision. This chain is UvrABC system protein C, found in Yersinia pseudotuberculosis serotype I (strain IP32953).